Reading from the N-terminus, the 333-residue chain is Acetoin:2,6-dichlorophenolindophenol oxidoreductase subunit alpha (333 aa).

Tetramer of 2 alpha and 2 beta subunits. It depends on thiamine diphosphate as a cofactor.

It functions in the pathway ketone degradation; acetoin degradation. Its function is as follows. Catalyzes the 2,6-dichlorophenolindophenol-dependent cleavage of acetoin into acetate and acetaldehyde, in vitro. The alpha subunit is probably the catalytic subunit of the enzyme. This Cupriavidus necator (strain ATCC 17699 / DSM 428 / KCTC 22496 / NCIMB 10442 / H16 / Stanier 337) (Ralstonia eutropha) protein is Acetoin:2,6-dichlorophenolindophenol oxidoreductase subunit alpha (acoA).